Here is a 2038-residue protein sequence, read N- to C-terminus: Non-reducing polyketide synthase ZEA1 (2038 aa).

An N-terminal acylcarrier protein transacylase domain (SAT) region spans residues 9-246 (LLFGDQTDSW…NELNIHALQH (238 aa)). The 431-residue stretch at 364 to 794 (PGRIAIVGMA…GGNACILLED (431 aa)) folds into the Ketosynthase family 3 (KS3) domain. Active-site for beta-ketoacyl synthase activity residues include cysteine 537, histidine 672, and histidine 711. The malonyl-CoA:ACP transacylase (MAT) domain stretch occupies residues 888 to 1172 (VFVFTGQGSH…VCSSFVRATL (285 aa)). Serine 979 serves as the catalytic For acyl/malonyl transferase activity. Positions 1221 to 1572 (SLLNLPTYAW…HFHEVENAVL (352 aa)) are product template (PT) domain. The tract at residues 1254 to 1405 (HETFKANIST…GQLIQARWDK (152 aa)) is N-terminal hotdog fold. One can recognise a PKS/mFAS DH domain in the interval 1254–1573 (HETFKANIST…FHEVENAVLD (320 aa)). Residues 1425-1573 (ISHRLQPQIL…FHEVENAVLD (149 aa)) are C-terminal hotdog fold. Residues 1616–1693 (QSDAHVLDSI…DLRRVFAPKS (78 aa)) enclose the Carrier domain. Serine 1653 bears the O-(pantetheine 4'-phosphoryl)serine mark. Residues 1700–1738 (NDLSRPSLVDDTSQALQSSGSESFDQPPTSVTSTSDSGS) form a disordered region. Over residues 1709–1737 (DDTSQALQSSGSESFDQPPTSVTSTSDSG) the composition is skewed to polar residues. Residues 1778–1882 (TGTIATYIHL…PRSKTVEDKN (105 aa)) form a thioesterase (TE) domain region. The active-site For thioesterase activity is histidine 2021.

Its pathway is mycotoxin biosynthesis. Functionally, non-reducing polyketide synthase; part of the gene cluster that mediates the biosynthesis of zearalenone (ZEA), a nonsteroid estrogen that is a contaminant of cereal grains and causes estrogenic disorders in humans and animals. The ZEA backbone is synthesized from a single acetyl-CoA molecule and eight malonyl-CoA molecules. The reducing polyketide synthase ZEA2 is proposed to synthesize a reduced hexaketide intermediate by using different combinations of its reductive domains during each round of condensation. The hexaketide thioester is then transacylated to the non-reducing polyketide synthase ZEA1 and is further condensed with three malonyl-CoAs without reductive tailoring to yield a mixed reduced/unreduced nonaketide. ZEA1 must be able to interact with ZEA2 to facilitate starter-unit acyltransfer and initiate polyketide biosynthesis. ZEA1 also mediates the required C2-C7 cyclization to form the resorcylate core and catalyzes the formation of the macrolactone. ZEA1 exhibits broad starter-unit specificities toward fatty acyl-CoAs ranging in sizes between C6 and C16 and displays the highest activity toward decanoyl-CoA. ZEB1 is then responsible for the chemical conversion of beta-zearalenonol (beta-ZOL) to ZEA in the biosynthetic pathway. The polypeptide is Non-reducing polyketide synthase ZEA1 (Gibberella zeae (strain ATCC MYA-4620 / CBS 123657 / FGSC 9075 / NRRL 31084 / PH-1) (Wheat head blight fungus)).